The sequence spans 326 residues: PDZ domain-containing protein MAGIX (326 aa).

The disordered stretch occupies residues 1 to 32; sequence MDSHAGNTADPRGSRRGVGLQGSGSPRARQLL. The region spanning 128–212 is the PDZ domain; the sequence is SVELVRGPAG…RLCLVLQRPQ (85 aa). The disordered stretch occupies residues 214–267; sequence MNGSRSKEVGGGHQKTDRIPDPRGGRMMESRGTISPVHHRPKTRTGPGPSPESV. Positions 218 to 242 are enriched in basic and acidic residues; sequence RSKEVGGGHQKTDRIPDPRGGRMME. Residue Ser263 is modified to Phosphoserine.

The sequence is that of PDZ domain-containing protein MAGIX (Magix) from Rattus norvegicus (Rat).